The sequence spans 284 residues: Hydrogenase expression/formation protein HupQ (284 aa).

Residues 1–23 form a disordered region; sequence MIGTQSILPPGFGPGSHGEEDRL.

Belongs to the HupH/HyaF family.

In Azotobacter chroococcum mcd 1, this protein is Hydrogenase expression/formation protein HupQ (hupQ).